The primary structure comprises 204 residues: Small ribosomal subunit protein uS4 (204 aa).

Positions 1–46 are disordered; the sequence is MSKRHSSKYKIDRRMGENIWGRPKSPVNRREYGPGQHGQRRRSKIS. The S4 RNA-binding domain maps to 94-157; sequence RRLDMIVYRA…QEMALVLEAQ (64 aa).

Belongs to the universal ribosomal protein uS4 family. Part of the 30S ribosomal subunit. Contacts protein S5. The interaction surface between S4 and S5 is involved in control of translational fidelity.

Functionally, one of the primary rRNA binding proteins, it binds directly to 16S rRNA where it nucleates assembly of the body of the 30S subunit. In terms of biological role, with S5 and S12 plays an important role in translational accuracy. The protein is Small ribosomal subunit protein uS4 of Zymomonas mobilis subsp. mobilis (strain ATCC 31821 / ZM4 / CP4).